We begin with the raw amino-acid sequence, 38 residues long: MKRKPMSRKASQKTFKKNTGVQRMNHLNPRAMRGGIRL.

The span at 1–16 shows a compositional bias: basic residues; the sequence is MKRKPMSRKASQKTFK. The interval 1 to 38 is disordered; sequence MKRKPMSRKASQKTFKKNTGVQRMNHLNPRAMRGGIRL.

It belongs to the microviridae J protein family.

It is found in the virion. It localises to the host cytoplasm. Mediates ssDNA packaging into virion, it locates to the internal surface of the capsid, thereby displacing the internal scaffolding protein VP3 during virion formation. Additionally, protein VP8 plays a role in viral attachment to the host cell. This Bdellovibrio phage phiMH2K (Bacteriophage phiMH2K) protein is DNA binding protein VP8.